Consider the following 168-residue polypeptide: Protein-export protein SecB (168 aa).

The protein belongs to the SecB family. Homotetramer, a dimer of dimers. One homotetramer interacts with 1 SecA dimer.

The protein localises to the cytoplasm. In terms of biological role, one of the proteins required for the normal export of preproteins out of the cell cytoplasm. It is a molecular chaperone that binds to a subset of precursor proteins, maintaining them in a translocation-competent state. It also specifically binds to its receptor SecA. This is Protein-export protein SecB from Saccharophagus degradans (strain 2-40 / ATCC 43961 / DSM 17024).